We begin with the raw amino-acid sequence, 1226 residues long: DNA-directed RNA polymerase subunit beta (1226 aa).

This sequence belongs to the RNA polymerase beta chain family. As to quaternary structure, the RNAP catalytic core consists of 2 alpha, 1 beta, 1 beta' and 1 omega subunit. When a sigma factor is associated with the core the holoenzyme is formed, which can initiate transcription.

The catalysed reaction is RNA(n) + a ribonucleoside 5'-triphosphate = RNA(n+1) + diphosphate. In terms of biological role, DNA-dependent RNA polymerase catalyzes the transcription of DNA into RNA using the four ribonucleoside triphosphates as substrates. This is DNA-directed RNA polymerase subunit beta from Leptospira interrogans serogroup Icterohaemorrhagiae serovar Lai (strain 56601).